Reading from the N-terminus, the 198-residue chain is ATP-dependent Clp protease proteolytic subunit (198 aa).

Ser98 (nucleophile) is an active-site residue. His123 is a catalytic residue.

This sequence belongs to the peptidase S14 family. In terms of assembly, fourteen ClpP subunits assemble into 2 heptameric rings which stack back to back to give a disk-like structure with a central cavity, resembling the structure of eukaryotic proteasomes.

The protein resides in the cytoplasm. The catalysed reaction is Hydrolysis of proteins to small peptides in the presence of ATP and magnesium. alpha-casein is the usual test substrate. In the absence of ATP, only oligopeptides shorter than five residues are hydrolyzed (such as succinyl-Leu-Tyr-|-NHMec, and Leu-Tyr-Leu-|-Tyr-Trp, in which cleavage of the -Tyr-|-Leu- and -Tyr-|-Trp bonds also occurs).. Functionally, cleaves peptides in various proteins in a process that requires ATP hydrolysis. Has a chymotrypsin-like activity. Plays a major role in the degradation of misfolded proteins. The sequence is that of ATP-dependent Clp protease proteolytic subunit from Listeria monocytogenes serovar 1/2a (strain ATCC BAA-679 / EGD-e).